The sequence spans 144 residues: Endoribonuclease YbeY (144 aa).

Zn(2+) contacts are provided by His105, His109, and Asp115.

It belongs to the endoribonuclease YbeY family. It depends on Zn(2+) as a cofactor.

Its subcellular location is the cytoplasm. Single strand-specific metallo-endoribonuclease involved in late-stage 70S ribosome quality control and in maturation of the 3' terminus of the 16S rRNA. The chain is Endoribonuclease YbeY from Chlorobium limicola (strain DSM 245 / NBRC 103803 / 6330).